We begin with the raw amino-acid sequence, 812 residues long: Lon protease (812 aa).

The Lon N-terminal domain maps to 22–215 (YAVLPLRDIV…KALSFMEAEI (194 aa)). 367-374 (GPPGVGKT) contributes to the ATP binding site. In terms of domain architecture, Lon proteolytic spans 602–783 (EDQVGVVTGL…GEVLKHALVR (182 aa)). Residues Ser-689 and Lys-732 contribute to the active site. The disordered stretch occupies residues 787–812 (PIEWTEQENPTAVPPVEDEAGASLAH).

It belongs to the peptidase S16 family. In terms of assembly, homohexamer. Organized in a ring with a central cavity.

Its subcellular location is the cytoplasm. The enzyme catalyses Hydrolysis of proteins in presence of ATP.. In terms of biological role, ATP-dependent serine protease that mediates the selective degradation of mutant and abnormal proteins as well as certain short-lived regulatory proteins. Required for cellular homeostasis and for survival from DNA damage and developmental changes induced by stress. Degrades polypeptides processively to yield small peptide fragments that are 5 to 10 amino acids long. Binds to DNA in a double-stranded, site-specific manner. Required for wild-type virulence during the initial stages of infection in the mouse model, but not essential for the establishment and maintenance of chronic infection in this host. This is Lon protease from Brucella abortus (strain 2308).